The chain runs to 1081 residues: FHIP family protein GA25918 (1081 aa).

Positions 1–11 are enriched in polar residues; sequence MSWLRSSPLRQ. 5 disordered regions span residues 1-31, 504-524, 650-685, 830-913, and 933-1027; these read MSWLRSSPLRQSGNGGGGGVSTGHSSTGSLR, ARPKSVHEQQAPSGATGEQPI, ADEESDATDLTVTTTTASEADLEHNSSSVSSGMGGG, NENS…AASS, and NNNN…SEPA. Serine 508 is modified (phosphoserine). Residues 657–668 show a composition bias toward low complexity; sequence TDLTVTTTTASE. Phosphoserine is present on serine 833. Residues 840-856 are compositionally biased toward low complexity; it reads QPQTTLSQQQQQQQGQQ. The segment covering 857–876 has biased composition (polar residues); sequence RSAYATLSAATPVQATQTSA. Composition is skewed to low complexity over residues 891–913 and 933–953; these read SKSISSMFSRRSTPNPPSSAASS and NNNNSGSGGQSQPFSSTGTGT. The segment covering 954-963 has biased composition (polar residues); the sequence is CETSLSTNPQ. The segment covering 964-993 has biased composition (low complexity); sequence SGAAAARSTGTATTANGNSSNSNISIGGST. A compositionally biased stretch (polar residues) spans 994-1010; that stretch reads QTLSGHSNTTTYSSSTL.

Belongs to the FHIP family.

The protein is FHIP family protein GA25918 of Drosophila pseudoobscura pseudoobscura (Fruit fly).